The sequence spans 209 residues: Putative 3-methyladenine DNA glycosylase (209 aa).

Belongs to the DNA glycosylase MPG family.

In Lactiplantibacillus plantarum (strain ATCC BAA-793 / NCIMB 8826 / WCFS1) (Lactobacillus plantarum), this protein is Putative 3-methyladenine DNA glycosylase.